A 631-amino-acid chain; its full sequence is Peptidyl-prolyl cis-trans isomerase CYP71 (631 aa).

Residues 26–45 (VEEEEPMVGPGPAPRGKRKR) are disordered. WD repeat units lie at residues 68–106 (MHRD…IEFA), 111–150 (SHLG…MMAM), 201–240 (IHMN…FPED), and 257–297 (KCKT…RRVY). The PPIase cyclophilin-type domain occupies 474–628 (LPENVIMHTT…QDVKILNVTV (155 aa)).

Belongs to the cyclophilin-type PPIase family. In terms of assembly, interacts with FAS1 and LHP1. Interacts (via WD repeat domain) with histone H3. Ubiquitous. Expressed in the meristems.

It localises to the nucleus. It catalyses the reaction [protein]-peptidylproline (omega=180) = [protein]-peptidylproline (omega=0). Functionally, PPIases accelerate the folding of proteins. It catalyzes the cis-trans isomerization of proline imidic peptide bonds in oligopeptides. Histone proline isomerase that increases the rate of cis-trans isomerization of the synthetic histone H3 peptides H3P30 (RKSAP30F-p-nitroanilide) and H3P30K27me3 (RKme3-SAP30F-p-nitroanilide) in the histone H3 N-terminal tail, in vitro. Histone remodeling factor involved in chromatin-based gene silencing. Reinforces H3K27 methylation. Involved in fundamental processes of chromatin assembly and histone modification by mediating the targeting of FAS1 and LHP1 on the chromatin. Required for the formation and development of leaves, for normal phyllotaxy and for the formation, maintenance and activity of root and shoot apical meristems. In Arabidopsis thaliana (Mouse-ear cress), this protein is Peptidyl-prolyl cis-trans isomerase CYP71.